The primary structure comprises 345 residues: KRR1 small subunit processome component homolog (345 aa).

One can recognise a KH domain in the interval 125-193 (DIIKIGNLVH…VRDIVLETMN (69 aa)). Residues 232–245 (NISKRKQPKVKKQK) show a composition bias toward basic residues. 2 disordered regions span residues 232–260 (NISK…ESKV) and 273–345 (QEQK…ARSS). The stretch at 270 to 298 (FLNQEQKQAKRNQERTEKQKEAAKRQDER) forms a coiled coil. Composition is skewed to basic and acidic residues over residues 276–302 (KQAK…RNKD) and 315–330 (RKKE…DVKA). Over residues 331 to 345 (LKAKLIKANKKARSS) the composition is skewed to basic residues.

Belongs to the KRR1 family. In terms of assembly, monomer. Component of the ribosomal small subunit (SSU) processome.

It localises to the nucleus. The protein resides in the nucleolus. In terms of biological role, required for 40S ribosome biogenesis. Involved in nucleolar processing of pre-18S ribosomal RNA and ribosome assembly. Binds to RNA. Required for female germline development, cell viability during eye development and for survival of dividing cells and epithelial cells during early wing disk development. The polypeptide is KRR1 small subunit processome component homolog (dbe) (Drosophila melanogaster (Fruit fly)).